A 577-amino-acid chain; its full sequence is Zinc finger-containing ubiquitin peptidase 1 (577 aa).

A C2H2-type 1 zinc finger spans residues Leu-2–His-24. A C2H2-type 2; atypical zinc finger spans residues Ile-29–His-52. 2 C2H2-type zinc fingers span residues Pro-153 to His-176 and Tyr-192 to His-214. An MIU region spans residues Asp-225–Arg-247. Basic and acidic residues predominate over residues Ser-231–Lys-261. Positions Ser-231–Leu-262 are disordered. The segment at Lys-248–Gly-273 is zUBD/ZHA. At Lys-261 the chain carries N6-acetyllysine. Residue Cys-359 is the Nucleophile of the active site. The active-site Proton acceptor is His-490. Asp-511 is a catalytic residue.

This sequence belongs to the peptidase C78 family. ZUFSP subfamily. In terms of assembly, interacts with RPA1 and RPA2.

It is found in the cytoplasm. It localises to the nucleus. The enzyme catalyses Thiol-dependent hydrolysis of ester, thioester, amide, peptide and isopeptide bonds formed by the C-terminal Gly of ubiquitin (a 76-residue protein attached to proteins as an intracellular targeting signal).. Its function is as follows. Deubiquitinase with endodeubiquitinase activity that specifically interacts with and cleaves 'Lys-63'-linked long polyubiquitin chains. Shows only weak activity against 'Lys-11' and 'Lys-48'-linked chains. Plays an important role in genome stability pathways, functioning to prevent spontaneous DNA damage and also promote cellular survival in response to exogenous DNA damage. Modulates the ubiquitination status of replication protein A (RPA) complex proteins in response to replication stress. The protein is Zinc finger-containing ubiquitin peptidase 1 of Rattus norvegicus (Rat).